The chain runs to 1597 residues: Collagen alpha-1(XVII) chain (1597 aa).

Disordered regions lie at residues M1–R155 and G168–K188. Over M1–W468 the chain is Cytoplasmic. A nonhelical region (NC16A) region spans residues M1–G567. Positions R9–I19 are enriched in basic and acidic residues. Composition is skewed to polar residues over residues T58–S96, E111–P120, and R170–L184. Residues R146 to S231 are necessary for interaction with DST and for the recruitment of DST to hemidesmosome. The chain crosses the membrane as a helical; Signal-anchor for type II membrane protein span at residues L469–L489. The Extracellular portion of the chain corresponds to A490–Y1597. 5 disordered regions span residues N562 to S857, L907 to R927, L970 to S1041, T1289 to A1316, and F1344 to G1394. Residues S568–A1572 form a triple-helical region region. Low complexity predominate over residues P604–R632. The segment covering G665–G674 has biased composition (gly residues). Low complexity-rich tracts occupy residues P730–D748 and D774–P796. Pro residues predominate over residues P820–P838. The segment covering A847–S857 has biased composition (low complexity). Pro residues-rich tracts occupy residues P910–L922, P977–P986, P1023–P1035, P1296–P1310, and P1348–P1357. A compositionally biased stretch (low complexity) spans S1377–M1393. An N-linked (GlcNAc...) asparagine glycan is attached at N1493. Residues G1531–L1566 are disordered. A compositionally biased stretch (basic and acidic residues) spans G1537 to A1557. Residues S1573–Y1597 form a nonhelical region (NC1) region.

In terms of assembly, homotrimers of alpha 1(XVII)chains. Interacts (via cytoplasmic region) with ITGB4 (via cytoplasmic region). Interacts (via cytoplasmic region) with DST (via N-terminus). Interacts (via N-terminus) with PLEC. Interacts (via cytoplasmic region) with DSP. The intracellular/endo domain is disulfide-linked. In terms of processing, prolines at the third position of the tripeptide repeating unit (G-X-Y) are hydroxylated in some or all of the chains. Post-translationally, the ectodomain is shedded from the surface of keratinocytes resulting in a 120-kDa soluble form, also named as 120 kDa linear IgA disease antigen homolog. The shedding is mediated by membrane-bound metalloproteases. As to expression, upper lamina lucidalhemidesmosome.

It is found in the cell junction. Its subcellular location is the hemidesmosome. The protein resides in the membrane. The protein localises to the secreted. It localises to the extracellular space. It is found in the extracellular matrix. Its subcellular location is the basement membrane. Functionally, the 120 kDa linear IgA disease antigen homolog is an anchoring filament component involved in dermal-epidermal cohesion. The sequence is that of Collagen alpha-1(XVII) chain (COL17A1) from Canis lupus familiaris (Dog).